Reading from the N-terminus, the 476-residue chain is Glycogen synthase (476 aa).

ADP-alpha-D-glucose is bound at residue K15.

The protein belongs to the glycosyltransferase 1 family. Bacterial/plant glycogen synthase subfamily.

The enzyme catalyses [(1-&gt;4)-alpha-D-glucosyl](n) + ADP-alpha-D-glucose = [(1-&gt;4)-alpha-D-glucosyl](n+1) + ADP + H(+). Its pathway is glycan biosynthesis; glycogen biosynthesis. In terms of biological role, synthesizes alpha-1,4-glucan chains using ADP-glucose. The chain is Glycogen synthase from Streptococcus agalactiae serotype III (strain NEM316).